The chain runs to 921 residues: Dual serine/threonine and tyrosine protein kinase (921 aa).

One can recognise a Protein kinase domain in the interval 645 to 899 (PKLGRELGRG…PLLGIVEPSL (255 aa)). ATP is bound by residues 651–659 (LGRGQYGVV) and Lys-674. Catalysis depends on Asp-770, which acts as the Proton acceptor.

This sequence belongs to the protein kinase superfamily. Ser/Thr protein kinase family.

The protein localises to the cytoplasm. Its subcellular location is the cell membrane. The protein resides in the apical cell membrane. It is found in the basolateral cell membrane. It localises to the cell junction. The catalysed reaction is L-seryl-[protein] + ATP = O-phospho-L-seryl-[protein] + ADP + H(+). The enzyme catalyses L-threonyl-[protein] + ATP = O-phospho-L-threonyl-[protein] + ADP + H(+). It catalyses the reaction L-tyrosyl-[protein] + ATP = O-phospho-L-tyrosyl-[protein] + ADP + H(+). May act as a positive regulator of ERK phosphorylation downstream of fibroblast growth factor-receptor activation. May induce both caspase-dependent apoptosis and caspase-independent cell death. May play a role in the embryonic development. The sequence is that of Dual serine/threonine and tyrosine protein kinase (dstyk) from Takifugu rubripes (Japanese pufferfish).